Here is a 165-residue protein sequence, read N- to C-terminus: Glycine cleavage system H protein, mitochondrial (165 aa).

Residues 1 to 34 (MALRMWASSTANALKLSSSSRLHLSPTFSISRCF) constitute a mitochondrion transit peptide. The Lipoyl-binding domain maps to 56–138 (VATIGITDHA…YEDGWMIKIK (83 aa)). Lys97 bears the N6-lipoyllysine mark.

This sequence belongs to the GcvH family. The glycine cleavage system is composed of four proteins: P, T, L and H. The cofactor is (R)-lipoate.

It is found in the mitochondrion. Its function is as follows. The glycine cleavage system catalyzes the degradation of glycine. The H protein shuttles the methylamine group of glycine from the P protein to the T protein. The chain is Glycine cleavage system H protein, mitochondrial (GDCSH) from Pisum sativum (Garden pea).